We begin with the raw amino-acid sequence, 156 residues long: Small ribosomal subunit protein uS7 (156 aa).

Belongs to the universal ribosomal protein uS7 family. As to quaternary structure, part of the 30S ribosomal subunit. Contacts proteins S9 and S11.

Functionally, one of the primary rRNA binding proteins, it binds directly to 16S rRNA where it nucleates assembly of the head domain of the 30S subunit. Is located at the subunit interface close to the decoding center, probably blocks exit of the E-site tRNA. The chain is Small ribosomal subunit protein uS7 from Sodalis glossinidius (strain morsitans).